Consider the following 221-residue polypeptide: Oxaloacetate tautomerase oaa1, mitochondrial (221 aa).

Mg(2+)-binding residues include glutamate 59, glutamate 61, and aspartate 93.

The protein belongs to the FAH family. The cofactor is Mg(2+). Mn(2+) is required as a cofactor.

The protein resides in the mitochondrion. It is found in the cytoplasm. It carries out the reaction oxaloacetate = enol-oxaloacetate. In terms of biological role, tautomerase that converts enol-oxaloacetate, a strong inhibitor of succinate dehydrogenase, to the physiological keto form of oxaloacetate. This chain is Oxaloacetate tautomerase oaa1, mitochondrial, found in Schizosaccharomyces pombe (strain 972 / ATCC 24843) (Fission yeast).